The sequence spans 181 residues: Peptide methionine sulfoxide reductase MsrA (181 aa).

The active site involves Cys14.

It belongs to the MsrA Met sulfoxide reductase family.

It carries out the reaction L-methionyl-[protein] + [thioredoxin]-disulfide + H2O = L-methionyl-(S)-S-oxide-[protein] + [thioredoxin]-dithiol. The catalysed reaction is [thioredoxin]-disulfide + L-methionine + H2O = L-methionine (S)-S-oxide + [thioredoxin]-dithiol. Has an important function as a repair enzyme for proteins that have been inactivated by oxidation. Catalyzes the reversible oxidation-reduction of methionine sulfoxide in proteins to methionine. The polypeptide is Peptide methionine sulfoxide reductase MsrA (Bacillus licheniformis (strain ATCC 14580 / DSM 13 / JCM 2505 / CCUG 7422 / NBRC 12200 / NCIMB 9375 / NCTC 10341 / NRRL NRS-1264 / Gibson 46)).